The chain runs to 358 residues: Mannonate dehydratase (358 aa).

It belongs to the mannonate dehydratase family. Requires Fe(2+) as cofactor. The cofactor is Mn(2+).

It catalyses the reaction D-mannonate = 2-dehydro-3-deoxy-D-gluconate + H2O. It functions in the pathway carbohydrate metabolism; pentose and glucuronate interconversion. Functionally, catalyzes the dehydration of D-mannonate. The protein is Mannonate dehydratase of Lactococcus lactis subsp. cremoris (strain MG1363).